Here is a 507-residue protein sequence, read N- to C-terminus: Cytochrome P450 monooxygenase cloA (507 aa).

A helical transmembrane segment spans residues 15 to 35 (WTWILLTTCIALISPLVLKGI). A glycan (N-linked (GlcNAc...) asparagine) is linked at asparagine 247. Heme is bound at residue cysteine 450.

This sequence belongs to the cytochrome P450 family. Heme serves as cofactor.

It localises to the membrane. The protein operates within alkaloid biosynthesis; ergot alkaloid biosynthesis. Its function is as follows. Cytochrome P450 monooxygenase; part of the gene cluster that mediates the biosynthesis of fungal ergot alkaloid. DmaW catalyzes the first step of ergot alkaloid biosynthesis by condensing dimethylallyl diphosphate (DMAP) and tryptophan to form 4-dimethylallyl-L-tryptophan. The second step is catalyzed by the methyltransferase easF that methylates 4-dimethylallyl-L-tryptophan in the presence of S-adenosyl-L-methionine, resulting in the formation of 4-dimethylallyl-L-abrine. The catalase easC and the FAD-dependent oxidoreductase easE then transform 4-dimethylallyl-L-abrine to chanoclavine-I which is further oxidized by easD in the presence of NAD(+), resulting in the formation of chanoclavine-I aldehyde. Agroclavine dehydrogenase easG then mediates the conversion of chanoclavine-I aldehyde to agroclavine via a non-enzymatic adduct reaction: the substrate is an iminium intermediate that is formed spontaneously from chanoclavine-I aldehyde in the presence of glutathione. The presence of easA is not required to complete this reaction. Further conversion of agroclavine to paspalic acid is a two-step process involving oxidation of agroclavine to elymoclavine and of elymoclavine to paspalic acid, the second step being performed by the elymoclavine oxidase cloA. Paspalic acid is then further converted to D-lysergic acid. Ergopeptines are assembled from D-lysergic acid and three different amino acids by the D-lysergyl-peptide-synthetases composed each of a monomudular and a trimodular nonribosomal peptide synthetase subunit. LpsB and lpsC encode the monomodular subunits responsible for D-lysergic acid activation and incorporation into the ergopeptine backbone. LpsA1 and A2 subunits encode the trimodular nonribosomal peptide synthetase assembling the tripeptide portion of ergopeptines. LpsA1 is responsible for formation of the major ergopeptine, ergotamine, and lpsA2 for alpha-ergocryptine, the minor ergopeptine of the total alkaloid mixture elaborated by C.purpurea. D-lysergyl-tripeptides are assembled by the nonribosomal peptide synthetases and released as N-(D-lysergyl-aminoacyl)-lactams. Cyclolization of the D-lysergyl-tripeptides is performed by the Fe(2+)/2-ketoglutarate-dependent dioxygenase easH which introduces a hydroxyl group into N-(D-lysergyl-aminoacyl)-lactam at alpha-C of the aminoacyl residue followed by spontaneous condensation with the terminal lactam carbonyl group. This is Cytochrome P450 monooxygenase cloA from Claviceps purpurea (strain 20.1) (Ergot fungus).